The sequence spans 349 residues: 4-hydroxy-tetrahydrodipicolinate reductase 2, chloroplastic (349 aa).

The N-terminal 53 residues, 1–53, are a transit peptide targeting the chloroplast; sequence MAANGLMAASSVFLHRPVHPHFSFSSRTNQMVPLGFKGRVSFIGNVKRCFPVV. NAD(+)-binding positions include 81-86, 173-175, and 196-199; these read GCSGKM, GTT, and SPQM. His-232 acts as the Proton donor/acceptor in catalysis. Catalysis depends on Lys-236, which acts as the Proton donor. 241–242 provides a ligand contact to (S)-2,3,4,5-tetrahydrodipicolinate; sequence GT.

Belongs to the DapB family.

It localises to the plastid. It is found in the chloroplast. The catalysed reaction is (S)-2,3,4,5-tetrahydrodipicolinate + NAD(+) + H2O = (2S,4S)-4-hydroxy-2,3,4,5-tetrahydrodipicolinate + NADH + H(+). The enzyme catalyses (S)-2,3,4,5-tetrahydrodipicolinate + NADP(+) + H2O = (2S,4S)-4-hydroxy-2,3,4,5-tetrahydrodipicolinate + NADPH + H(+). It participates in amino-acid biosynthesis; L-lysine biosynthesis via DAP pathway; (S)-tetrahydrodipicolinate from L-aspartate: step 4/4. Its function is as follows. Catalyzes the conversion of 4-hydroxy-tetrahydrodipicolinate (HTPA) to tetrahydrodipicolinate. The protein is 4-hydroxy-tetrahydrodipicolinate reductase 2, chloroplastic (DAPB2) of Arabidopsis thaliana (Mouse-ear cress).